The sequence spans 194 residues: Imidazoleglycerol-phosphate dehydratase (194 aa).

This sequence belongs to the imidazoleglycerol-phosphate dehydratase family.

It localises to the cytoplasm. The catalysed reaction is D-erythro-1-(imidazol-4-yl)glycerol 3-phosphate = 3-(imidazol-4-yl)-2-oxopropyl phosphate + H2O. It functions in the pathway amino-acid biosynthesis; L-histidine biosynthesis; L-histidine from 5-phospho-alpha-D-ribose 1-diphosphate: step 6/9. In Clostridium kluyveri (strain NBRC 12016), this protein is Imidazoleglycerol-phosphate dehydratase.